Reading from the N-terminus, the 115-residue chain is Migration and invasion enhancer 1 (115 aa).

The span at Met1–Val10 shows a compositional bias: polar residues. The tract at residues Met1–Gly22 is disordered. Ser2 carries the post-translational modification N-acetylserine. Cys30 and Cys33 are oxidised to a cystine. Cys112 is lipidated: S-geranylgeranyl cysteine. A propeptide spans Val113 to Leu115 (removed in mature form).

The protein belongs to the SelWTH family. In terms of assembly, interacts with GPX1. In terms of processing, isoprenylation facilitates association with the plasma membrane and enhances the migratory phenotype of cells by inducing increased filopodia formation.

Its subcellular location is the cytoplasm. It is found in the cytosol. The protein resides in the cell membrane. In terms of biological role, increases cell migration by inducing filopodia formation at the leading edge of migrating cells. Plays a role in regulation of apoptosis, possibly through control of CASP3. May be involved in a redox-related process. The sequence is that of Migration and invasion enhancer 1 (MIEN1) from Bos taurus (Bovine).